The sequence spans 107 residues: Ig kappa chain V-VI region NQ2-17.4.1 (107 aa).

The segment at 1 to 23 (QIVLTQSPAIMSASPGQKVTMTC) is framework-1. Cys23 and Cys87 form a disulfide bridge. A complementarity-determining-1 region spans residues 24 to 33 (SASSSVSYMH). Positions 34–48 (WYQQKSGTSPKRWIY) are framework-2. The interval 49 to 55 (DTSKLAS) is complementarity-determining-2. Residues 56 to 87 (GVPARFSGSGSATSYSLTITSMQAEDAATYYC) form a framework-3 region. The interval 88 to 96 (QQWSSNPLT) is complementarity-determining-3. Residues 97 to 106 (FGAGTKLELK) form a framework-4 region.

Functionally, anti-2-phenyl oxazolone (PHOX) Antibody. This chain is Ig kappa chain V-VI region NQ2-17.4.1, found in Mus musculus (Mouse).